A 165-amino-acid chain; its full sequence is MLSLKYRIVLGLAAVVMLIDQGTKWLVEATIPFHGTVPVIHGVFDLVNIRNRGAAFGFLNRSDIEWQFWLFLVATVLAVWAILSLTRASKNEPVLYTAFGLIMGGALGNLVDRIRYRAVVDFLDFYWGEWHWPAFNVADIAICIGAFLAFVAMYRQPSPERGNKE.

A run of 2 helical transmembrane segments spans residues 66–86 (WQFW…LSLT) and 91–111 (NEPV…GNLV). Active-site residues include Asp121 and Asp139. The helical transmembrane segment at 132–152 (WPAFNVADIAICIGAFLAFVA) threads the bilayer.

This sequence belongs to the peptidase A8 family.

Its subcellular location is the cell inner membrane. It catalyses the reaction Release of signal peptides from bacterial membrane prolipoproteins. Hydrolyzes -Xaa-Yaa-Zaa-|-(S,diacylglyceryl)Cys-, in which Xaa is hydrophobic (preferably Leu), and Yaa (Ala or Ser) and Zaa (Gly or Ala) have small, neutral side chains.. It functions in the pathway protein modification; lipoprotein biosynthesis (signal peptide cleavage). Its function is as follows. This protein specifically catalyzes the removal of signal peptides from prolipoproteins. The polypeptide is Lipoprotein signal peptidase (Nitratidesulfovibrio vulgaris (strain DP4) (Desulfovibrio vulgaris)).